Here is a 282-residue protein sequence, read N- to C-terminus: Elongation factor Ts (282 aa).

The tract at residues 79 to 82 (TDFV) is involved in Mg(2+) ion dislocation from EF-Tu.

It belongs to the EF-Ts family.

The protein localises to the cytoplasm. Functionally, associates with the EF-Tu.GDP complex and induces the exchange of GDP to GTP. It remains bound to the aminoacyl-tRNA.EF-Tu.GTP complex up to the GTP hydrolysis stage on the ribosome. The polypeptide is Elongation factor Ts (Shewanella loihica (strain ATCC BAA-1088 / PV-4)).